We begin with the raw amino-acid sequence, 277 residues long: Xyloglucan endotransglucosylase/hydrolase protein 19 (277 aa).

The N-terminal stretch at 1–21 is a signal peptide; it reads MKSFTFLILFLFAAQSISVYA. Positions 22–213 constitute a GH16 domain; that stretch reads GSFHKDVKIH…WSKAPFTAYY (192 aa). Glu-99 (nucleophile) is an active-site residue. Glu-103 serves as the catalytic Proton donor. Glu-103 contributes to the xyloglucan binding site. N-linked (GlcNAc...) asparagine glycosylation occurs at Asn-107. Xyloglucan-binding positions include 116 to 118, 126 to 128, 192 to 193, and Gly-197; these read HTN, DKE, and HW. 2 cysteine pairs are disulfide-bonded: Cys-221–Cys-230 and Cys-262–Cys-276. Arg-267 serves as a coordination point for xyloglucan.

Belongs to the glycosyl hydrolase 16 family. XTH group 2 subfamily. Contains at least one intrachain disulfide bond essential for its enzymatic activity. Root specific.

It is found in the secreted. Its subcellular location is the cell wall. The protein localises to the extracellular space. It localises to the apoplast. It carries out the reaction breaks a beta-(1-&gt;4) bond in the backbone of a xyloglucan and transfers the xyloglucanyl segment on to O-4 of the non-reducing terminal glucose residue of an acceptor, which can be a xyloglucan or an oligosaccharide of xyloglucan.. In terms of biological role, possesses xyloglucan endotransglucosylase (XET) activity in vitro. Does not possess xyloglucan endohydrolysis (XEH) activity. Cleaves and religates xyloglucan polymers, an essential constituent of the primary cell wall, and thereby participates in cell wall construction of growing tissues. Involved in cell proliferation in the tissue reunion process of wounded inflorescence stems. Maybe a downstream target of NAC071 as a consequence of auxin action in wounded stems. This is Xyloglucan endotransglucosylase/hydrolase protein 19 from Arabidopsis thaliana (Mouse-ear cress).